Here is a 402-residue protein sequence, read N- to C-terminus: Ubiquitin-like modifier-activating enzyme 5 (402 aa).

The ATP site is built by Gly81, Asp102, Lys125, Asn148, and Asn182. Positions 224 and 227 each coordinate Zn(2+). Cys248 serves as the catalytic Glycyl thioester intermediate. The Zn(2+) site is built by Cys301 and Cys306. Positions 369–402 (EAPEKSSETSEETVTTAPPDDASLEDLMAQMKSM) are disordered.

Belongs to the ubiquitin-activating E1 family. UBA5 subfamily.

E1-like enzyme which activates UFM1. This chain is Ubiquitin-like modifier-activating enzyme 5, found in Drosophila erecta (Fruit fly).